A 274-amino-acid polypeptide reads, in one-letter code: Formamidopyrimidine-DNA glycosylase (274 aa).

The active-site Schiff-base intermediate with DNA is proline 2. Glutamate 3 serves as the catalytic Proton donor. The Proton donor; for beta-elimination activity role is filled by lysine 59. 3 residues coordinate DNA: histidine 93, arginine 112, and arginine 155. Residues 240–274 (QVYGRTGRPCPRCGQPLERVRLGGRSTHFCPRCQV) form an FPG-type zinc finger. The active-site Proton donor; for delta-elimination activity is arginine 264.

The protein belongs to the FPG family. As to quaternary structure, monomer. Requires Zn(2+) as cofactor.

The enzyme catalyses Hydrolysis of DNA containing ring-opened 7-methylguanine residues, releasing 2,6-diamino-4-hydroxy-5-(N-methyl)formamidopyrimidine.. It carries out the reaction 2'-deoxyribonucleotide-(2'-deoxyribose 5'-phosphate)-2'-deoxyribonucleotide-DNA = a 3'-end 2'-deoxyribonucleotide-(2,3-dehydro-2,3-deoxyribose 5'-phosphate)-DNA + a 5'-end 5'-phospho-2'-deoxyribonucleoside-DNA + H(+). In terms of biological role, involved in base excision repair of DNA damaged by oxidation or by mutagenic agents. Acts as a DNA glycosylase that recognizes and removes damaged bases. Has a preference for oxidized purines, such as 7,8-dihydro-8-oxoguanine (8-oxoG). Has AP (apurinic/apyrimidinic) lyase activity and introduces nicks in the DNA strand. Cleaves the DNA backbone by beta-delta elimination to generate a single-strand break at the site of the removed base with both 3'- and 5'-phosphates. In Moorella thermoacetica (strain ATCC 39073 / JCM 9320), this protein is Formamidopyrimidine-DNA glycosylase.